A 165-amino-acid polypeptide reads, in one-letter code: Bark lectin isoform 2 (165 aa).

N-linked (GlcNAc...) asparagine glycosylation is found at asparagine 27 and asparagine 57. Cystine bridges form between cysteine 33–cysteine 80 and cysteine 126–cysteine 133.

Belongs to the protease inhibitor I3 (leguminous Kunitz-type inhibitor) family. In terms of assembly, dimer.

In terms of biological role, glucose and N-acetylglucosamine binding lectin. Has hemagglutinating activity against human and rabbit erythrocytes which does not require divalent cations. Inhibits factor Xa and, to a lesser extent, trypsin. Does not inhibit neutrophil elastase, human plasma kallikrein, papain, human plasmin, porcine pancreatic kallikrein and bovin chymotrypsin. Has insecticidal activity against the termite species N.corniger. Induces apoptosis in prostrate cancer cell lines DU145 and PC3. This Crateva tapia (Garlic-pear tree) protein is Bark lectin isoform 2.